The following is a 118-amino-acid chain: Lutropin subunit beta (118 aa).

6 disulfide bridges follow: C9-C57, C23-C72, C26-C110, C34-C88, C38-C90, and C93-C100. N13 carries an N-linked (GlcNAc...) asparagine glycan.

This sequence belongs to the glycoprotein hormones subunit beta family. As to quaternary structure, heterodimer of a common alpha chain and a unique beta chain which confers biological specificity to thyrotropin, lutropin, follitropin and gonadotropin.

It localises to the secreted. Functionally, promotes spermatogenesis and ovulation by stimulating the testes and ovaries to synthesize steroids. The polypeptide is Lutropin subunit beta (LHB) (Balaenoptera acutorostrata (Common minke whale)).